The following is a 268-amino-acid chain: Ribosomal RNA small subunit methyltransferase A (268 aa).

S-adenosyl-L-methionine contacts are provided by asparagine 12, leucine 14, glycine 38, glutamate 59, aspartate 82, and asparagine 107.

This sequence belongs to the class I-like SAM-binding methyltransferase superfamily. rRNA adenine N(6)-methyltransferase family. RsmA subfamily.

It localises to the cytoplasm. It carries out the reaction adenosine(1518)/adenosine(1519) in 16S rRNA + 4 S-adenosyl-L-methionine = N(6)-dimethyladenosine(1518)/N(6)-dimethyladenosine(1519) in 16S rRNA + 4 S-adenosyl-L-homocysteine + 4 H(+). Specifically dimethylates two adjacent adenosines (A1518 and A1519) in the loop of a conserved hairpin near the 3'-end of 16S rRNA in the 30S particle. May play a critical role in biogenesis of 30S subunits. The polypeptide is Ribosomal RNA small subunit methyltransferase A (Aster yellows witches'-broom phytoplasma (strain AYWB)).